The following is an 869-amino-acid chain: Rho GTPase-activating protein 27 (869 aa).

Residues 6 to 69 form the SH3 domain; sequence EGDVYVLVEH…PAQYVRELPA (64 aa). A Phosphotyrosine modification is found at alanine 28. The tract at residues 104 to 134 is disordered; sequence GADGSSAEPRGRASSLCGPARQRTGGQRNSL. Serine 155, serine 215, and serine 249 each carry phosphoserine. Disordered regions lie at residues 208-300 and 331-401; these read RCPP…SGES and ETEE…GWSC. A compositionally biased stretch (basic and acidic residues) spans 209–220; the sequence is CPPRAESPKQVD. The span at 235-250 shows a compositional bias: low complexity; it reads RATSPRSAAAPPRLSP. One can recognise a WW 1 domain in the interval 246-280; that stretch reads PRLSPVWETHTDTGTGRPYYYNPDTGVTTWESPFE. A compositionally biased stretch (polar residues) spans 283 to 294; sequence EGTTSPATSRAS. One can recognise a WW 2 domain in the interval 299–333; it reads ESLETEWGQYWDEESRRVFFYNPLTGETAWEDETE. Polar residues predominate over residues 345–356; that stretch reads MQPSLSPRSPGQ. Serine 350 is modified (phosphoserine). Residues 414 to 447 form the WW 3 domain; that stretch reads QFTQEQWVRLEDQHGKPYFYNPEDSSVQWELPQV. Disordered stretches follow at residues 449 to 477 and 623 to 642; these read IPAPRSVRKSSQDSDTPAQASPPEEKIKT and EEDVRQNAASPSLSPGGLES. A phosphoserine mark is found at serine 459 and serine 462. Threonine 464 is subject to Phosphothreonine. Phosphoserine is present on serine 469. The PH domain maps to 477 to 593; that stretch reads TLDKAGVLHR…WHKAIAEGIS (117 aa). A phosphoserine mark is found at serine 632 and serine 636. In terms of domain architecture, Rho-GAP spans 677-866; it reads CALAQLCERE…LILHQCADIF (190 aa).

As to quaternary structure, interacts with SH3KBP1/CIN85. In terms of tissue distribution, widely expressed. Highly expressed in kidney, lung, small intestine and thymus.

Its subcellular location is the cytoplasm. The protein localises to the membrane. Rho GTPase-activating protein which may be involved in clathrin-mediated endocytosis. GTPase activators for the Rho-type GTPases act by converting them to an inactive GDP-bound state. Has activity toward CDC42 and RAC1. This is Rho GTPase-activating protein 27 (Arhgap27) from Mus musculus (Mouse).